Consider the following 336-residue polypeptide: Glycerol-3-phosphate dehydrogenase [NAD(P)+] (336 aa).

Residues S11, W12, R33, R34, and K107 each coordinate NADPH. K107 and G137 together coordinate sn-glycerol 3-phosphate. Residue A141 coordinates NADPH. K192, D245, S255, R256, and N257 together coordinate sn-glycerol 3-phosphate. The Proton acceptor role is filled by K192. R256 serves as a coordination point for NADPH. E282 provides a ligand contact to NADPH.

This sequence belongs to the NAD-dependent glycerol-3-phosphate dehydrogenase family.

It is found in the cytoplasm. The enzyme catalyses sn-glycerol 3-phosphate + NAD(+) = dihydroxyacetone phosphate + NADH + H(+). The catalysed reaction is sn-glycerol 3-phosphate + NADP(+) = dihydroxyacetone phosphate + NADPH + H(+). It functions in the pathway membrane lipid metabolism; glycerophospholipid metabolism. Its function is as follows. Catalyzes the reduction of the glycolytic intermediate dihydroxyacetone phosphate (DHAP) to sn-glycerol 3-phosphate (G3P), the key precursor for phospholipid synthesis. The polypeptide is Glycerol-3-phosphate dehydrogenase [NAD(P)+] (Thermobifida fusca (strain YX)).